The sequence spans 114 residues: MLSGVCARLASALRGTRAPPSAVALRCLHASSSRPSADKRDRTEKPPRAFDQALLEFLVCPLSKKPLRYEASTNELINEELGIAYPIIDGIPNMIPQAARMTHQNKKQEEVEQH.

Residues 1–35 (MLSGVCARLASALRGTRAPPSAVALRCLHASSSRP) constitute a mitochondrion transit peptide. The 47-residue stretch at 51–97 (DQALLEFLVCPLSKKPLRYEASTNELINEELGIAYPIIDGIPNMIPQ) folds into the TRM112 domain.

Belongs to the PREY family.

The protein localises to the mitochondrion. In Bos taurus (Bovine), this protein is Protein preY, mitochondrial (PREY).